The primary structure comprises 472 residues: 3-isopropylmalate dehydratase large subunit (472 aa).

The [4Fe-4S] cluster site is built by Cys347, Cys407, and Cys410.

This sequence belongs to the aconitase/IPM isomerase family. LeuC type 1 subfamily. In terms of assembly, heterodimer of LeuC and LeuD. [4Fe-4S] cluster serves as cofactor.

It catalyses the reaction (2R,3S)-3-isopropylmalate = (2S)-2-isopropylmalate. The protein operates within amino-acid biosynthesis; L-leucine biosynthesis; L-leucine from 3-methyl-2-oxobutanoate: step 2/4. Catalyzes the isomerization between 2-isopropylmalate and 3-isopropylmalate, via the formation of 2-isopropylmaleate. The sequence is that of 3-isopropylmalate dehydratase large subunit from Synechococcus sp. (strain CC9605).